Consider the following 391-residue polypeptide: Alanine racemase, biosynthetic (391 aa).

Lys52 serves as the catalytic Proton acceptor; specific for D-alanine. Lys52 bears the N6-(pyridoxal phosphate)lysine mark. Arg149 lines the substrate pocket. Tyr271 acts as the Proton acceptor; specific for L-alanine in catalysis. Met330 lines the substrate pocket.

This sequence belongs to the alanine racemase family. Requires pyridoxal 5'-phosphate as cofactor.

The enzyme catalyses L-alanine = D-alanine. It participates in amino-acid biosynthesis; D-alanine biosynthesis; D-alanine from L-alanine: step 1/1. Its pathway is cell wall biogenesis; peptidoglycan biosynthesis. Catalyzes the interconversion of L-alanine and D-alanine. Provides the D-alanine required for cell wall biosynthesis. The sequence is that of Alanine racemase, biosynthetic (alr) from Agrobacterium fabrum (strain C58 / ATCC 33970) (Agrobacterium tumefaciens (strain C58)).